The sequence spans 374 residues: uncharacterized protein (374 aa).

An N-terminal signal peptide occupies residues 1–21 (MSIISRVCIPCAVLLFAQLHA). One can recognise a Fibronectin type-III domain in the interval 22–102 (KELVHVSQLK…ASASAWTSLS (81 aa)).

This is an uncharacterized protein from Treponema pallidum (strain Nichols).